Consider the following 273-residue polypeptide: Undecaprenyl-diphosphatase (273 aa).

7 helical membrane passes run 6–26, 45–65, 90–110, 116–136, 190–210, 222–242, and 252–272; these read SLLI…LPVS, AKTF…VMFW, LTLI…LLFH, LFNP…LIAA, YAAS…ATAL, GDIS…LIAI, and ISFI…YVVF.

It belongs to the UppP family.

It is found in the cell inner membrane. It carries out the reaction di-trans,octa-cis-undecaprenyl diphosphate + H2O = di-trans,octa-cis-undecaprenyl phosphate + phosphate + H(+). Its function is as follows. Catalyzes the dephosphorylation of undecaprenyl diphosphate (UPP). Confers resistance to bacitracin. This chain is Undecaprenyl-diphosphatase, found in Shigella sonnei (strain Ss046).